A 196-amino-acid chain; its full sequence is DnaA initiator-associating protein DiaA (196 aa).

In terms of domain architecture, SIS spans 34–196 (LVQSLLNGNK…DNTLFPHQAD (163 aa)).

It belongs to the SIS family. DiaA subfamily. Homotetramer; dimer of dimers.

Functionally, required for the timely initiation of chromosomal replication via direct interactions with the DnaA initiator protein. The polypeptide is DnaA initiator-associating protein DiaA (Edwardsiella ictaluri (strain 93-146)).